The following is a 176-amino-acid chain: ATP-dependent protease subunit HslV (176 aa).

Thr2 is an active-site residue. 3 residues coordinate Na(+): Gly157, Cys160, and Thr163.

It belongs to the peptidase T1B family. HslV subfamily. As to quaternary structure, a double ring-shaped homohexamer of HslV is capped on each side by a ring-shaped HslU homohexamer. The assembly of the HslU/HslV complex is dependent on binding of ATP.

The protein localises to the cytoplasm. It catalyses the reaction ATP-dependent cleavage of peptide bonds with broad specificity.. Allosterically activated by HslU binding. Functionally, protease subunit of a proteasome-like degradation complex believed to be a general protein degrading machinery. This chain is ATP-dependent protease subunit HslV, found in Erwinia tasmaniensis (strain DSM 17950 / CFBP 7177 / CIP 109463 / NCPPB 4357 / Et1/99).